Here is a 714-residue protein sequence, read N- to C-terminus: ATP-dependent DNA helicase DinG (714 aa).

Residues 17–294 (ALQDQIPDFI…TCMEQFRPKT (278 aa)) enclose the Helicase ATP-binding domain. ATP is bound at residue 54–61 (APTGVGKT). C120, C194, C199, and C205 together coordinate [4Fe-4S] cluster. The short motif at 248-251 (DEGH) is the DEAH box element. The 182-residue stretch at 517-698 (HIAEMAAYFR…VFPIEQPAVP (182 aa)) folds into the Helicase C-terminal domain.

Belongs to the helicase family. DinG subfamily. Type 1 sub-subfamily. [4Fe-4S] cluster is required as a cofactor.

It carries out the reaction Couples ATP hydrolysis with the unwinding of duplex DNA at the replication fork by translocating in the 5'-3' direction. This creates two antiparallel DNA single strands (ssDNA). The leading ssDNA polymer is the template for DNA polymerase III holoenzyme which synthesizes a continuous strand.. The enzyme catalyses ATP + H2O = ADP + phosphate + H(+). Its function is as follows. DNA-dependent ATPase and 5'-3' DNA helicase. Unwinds D-loops, R-loops, forked DNA and G-quadruplex DNA. This Salmonella paratyphi A (strain ATCC 9150 / SARB42) protein is ATP-dependent DNA helicase DinG.